The following is a 586-amino-acid chain: Pyruvate kinase (586 aa).

Arginine 32 provides a ligand contact to substrate. Asparagine 34, serine 36, aspartate 66, and threonine 67 together coordinate K(+). 34-37 (NFSH) provides a ligand contact to ATP. The ATP site is built by arginine 73 and lysine 156. Glutamate 222 is a Mg(2+) binding site. Substrate contacts are provided by glycine 245, aspartate 246, and threonine 278. Mg(2+) is bound at residue aspartate 246.

Belongs to the pyruvate kinase family. The protein in the C-terminal section; belongs to the PEP-utilizing enzyme family. Homotetramer. Mg(2+) serves as cofactor. K(+) is required as a cofactor.

The enzyme catalyses pyruvate + ATP = phosphoenolpyruvate + ADP + H(+). Its pathway is carbohydrate degradation; glycolysis; pyruvate from D-glyceraldehyde 3-phosphate: step 5/5. The sequence is that of Pyruvate kinase (pyk) from Sporosarcina psychrophila (Bacillus psychrophilus).